The sequence spans 310 residues: Protein DOS2 (310 aa).

Composition is skewed to basic and acidic residues over residues 15-26 (DKISNSHTKETG) and 135-146 (SNDKDENSKENE). Disordered stretches follow at residues 15 to 45 (DKIS…KTNE) and 131 to 151 (AEND…AVGG). Residues 176 to 228 (QLDPFDVDEKTEEICSILQGDKDISKLMNDIVPHKISYKDFWHIYFLQRNKIL) enclose the BSD domain. Residues 240–310 (KKEKETEEKE…KDDDDDDDWE (71 aa)) are disordered. Residues 247-263 (EKEVEWDDEEEEEDDDK) show a composition bias toward acidic residues. Basic and acidic residues-rich tracts occupy residues 264-276 (VEAV…KGET) and 284-300 (GLKD…KDES). Residues 301 to 310 (KDDDDDDDWE) show a composition bias toward acidic residues.

In terms of biological role, acts in ubiquitin metabolism and is necessary for the control of single-copy DNA replication. In Saccharomyces cerevisiae (strain ATCC 204508 / S288c) (Baker's yeast), this protein is Protein DOS2 (DOS2).